Consider the following 235-residue polypeptide: Serine protease SplA (235 aa).

Positions 1–35 (MNKNVMVKGLTALTILTSLGFAENISNQPHSIAKA) are cleaved as a signal peptide. Catalysis depends on charge relay system residues His-74, Asp-113, and Ser-189.

Belongs to the peptidase S1B family.

It localises to the secreted. The sequence is that of Serine protease SplA (splA) from Staphylococcus aureus (strain Mu3 / ATCC 700698).